A 463-amino-acid polypeptide reads, in one-letter code: ATP-dependent protease ATPase subunit HslU (463 aa).

ATP is bound by residues isoleucine 19, 61–66 (GVGKTE), aspartate 277, glutamate 341, and arginine 413.

Belongs to the ClpX chaperone family. HslU subfamily. A double ring-shaped homohexamer of HslV is capped on each side by a ring-shaped HslU homohexamer. The assembly of the HslU/HslV complex is dependent on binding of ATP.

The protein resides in the cytoplasm. Functionally, ATPase subunit of a proteasome-like degradation complex; this subunit has chaperone activity. The binding of ATP and its subsequent hydrolysis by HslU are essential for unfolding of protein substrates subsequently hydrolyzed by HslV. HslU recognizes the N-terminal part of its protein substrates and unfolds these before they are guided to HslV for hydrolysis. The polypeptide is ATP-dependent protease ATPase subunit HslU (Bacillus anthracis (strain A0248)).